The chain runs to 176 residues: Tubulin polymerization-promoting protein family member 3 (176 aa).

An N-acetylalanine modification is found at alanine 2.

It belongs to the TPPP family.

Its subcellular location is the cytoplasm. The protein localises to the cytoskeleton. Regulator of microtubule dynamic that has microtubule bundling activity. Required for embryo implantation; possibly by regulating beta-catenin. Also required for decidualization via regulation of beta-catenin. The polypeptide is Tubulin polymerization-promoting protein family member 3 (TPPP3) (Bos taurus (Bovine)).